A 783-amino-acid chain; its full sequence is B-cell scaffold protein with ankyrin repeats (783 aa).

The interval 1 to 154 is interaction with ITPR2; sequence MLPVASGTRG…GYISVIRQIL (154 aa). One can recognise a TIR domain in the interval 25 to 153; the sequence is NAKDILLLYE…DGYISVIRQI (129 aa). The DBB domain maps to 199 to 326; sequence VLPGEIPCEK…EIPYYEFKHL (128 aa). 2 ANK repeats span residues 341–370 and 377–407; these read ELPT…ATRA and DGSD…NTGR. 4 disordered regions span residues 422-521, 538-586, 604-624, and 641-670; these read FSTY…AASQ, MERS…EDNE, SFII…PPKE, and RQSD…STRD. Positions 444–479 are enriched in basic and acidic residues; it reads RNTDRSEEPERSVEMKEEEAGAEARRSLSEGERESS. Positions 505–515 are enriched in pro residues; that stretch reads HCRPPLLPPRP. Residues 549-565 are compositionally biased toward basic and acidic residues; the sequence is ARPETREESSREEKKEE. The segment covering 566–586 has biased composition (acidic residues); the sequence is AQEEEEEEENPYAFAETEDNE. Residues 610-620 show a composition bias toward pro residues; that stretch reads PPAPTPRPTHI. Over residues 641–660 the composition is skewed to basic and acidic residues; the sequence is RQSDGDKFYSLPKKPDKTRM. The residue at position 649 (tyrosine 649) is a Phosphotyrosine.

As to quaternary structure, interacts with LYN, ITPR1 and ITPR2. Phosphorylated on tyrosines upon BCR activation. Specifically expressed in spleen. Highly expressed in immature B-cells and recirculating B-cells, and at low levels in pro-B and pre-B cells.

Its function is as follows. Involved in B-cell receptor (BCR)-induced Ca(2+) mobilization from intracellular stores. Promotes Lyn-mediated phosphorylation of IP3 receptors 1 and 2. This chain is B-cell scaffold protein with ankyrin repeats (Bank1), found in Mus musculus (Mouse).